The chain runs to 240 residues: UDP-2,3-diacylglucosamine hydrolase (240 aa).

Residues aspartate 8, histidine 10, aspartate 41, asparagine 79, and histidine 114 each coordinate Mn(2+). 79-80 is a substrate binding site; the sequence is NR. Substrate is bound by residues aspartate 122, serine 160, asparagine 164, lysine 167, and histidine 195. Residues histidine 195 and histidine 197 each coordinate Mn(2+).

The protein belongs to the LpxH family. The cofactor is Mn(2+).

The protein resides in the cell inner membrane. The catalysed reaction is UDP-2-N,3-O-bis[(3R)-3-hydroxytetradecanoyl]-alpha-D-glucosamine + H2O = 2-N,3-O-bis[(3R)-3-hydroxytetradecanoyl]-alpha-D-glucosaminyl 1-phosphate + UMP + 2 H(+). It participates in glycolipid biosynthesis; lipid IV(A) biosynthesis; lipid IV(A) from (3R)-3-hydroxytetradecanoyl-[acyl-carrier-protein] and UDP-N-acetyl-alpha-D-glucosamine: step 4/6. In terms of biological role, hydrolyzes the pyrophosphate bond of UDP-2,3-diacylglucosamine to yield 2,3-diacylglucosamine 1-phosphate (lipid X) and UMP by catalyzing the attack of water at the alpha-P atom. Involved in the biosynthesis of lipid A, a phosphorylated glycolipid that anchors the lipopolysaccharide to the outer membrane of the cell. The sequence is that of UDP-2,3-diacylglucosamine hydrolase from Salmonella paratyphi C (strain RKS4594).